A 386-amino-acid polypeptide reads, in one-letter code: Circumsporozoite protein (386 aa).

The signal sequence occupies residues Met-1–Cys-22. Residues His-51–Lys-304 are disordered. The span at Asp-72–Asp-100 shows a compositional bias: basic and acidic residues. Positions Lys-80–Arg-88 are required for the binding to heparan sulfate proteoglycans (HSPGs) on the surface of host hepatocytes. The region I; contains the proteolytic cleavage site stretch occupies residues Lys-91–Pro-95. Tandem repeats lie at residues Gly-96–Ala-104, Gly-105–Ala-113, Gly-114–Ala-122, Gly-123–Ala-131, Gly-132–Ala-140, Gly-141–Ala-149, Gly-150–Ala-158, Gly-159–Ala-167, Gly-168–Ala-176, Gly-177–Ala-185, Gly-186–Ala-194, Gly-195–Ala-203, Gly-204–Ala-212, Gly-213–Ala-221, Gly-222–Ala-230, Gly-231–Ala-239, Gly-240–Ala-248, Gly-249–Ala-257, Gly-258–Ala-266, and Gly-267–Ala-275. Positions Gly-96–Ala-275 are 20 X 9 AA tandem repeats of G-D-R-A-[AD]-G-Q-P-A. The segment covering Ala-275–Gly-292 has biased composition (gly residues). Over residues Gln-293–Glu-303 the composition is skewed to low complexity. Residues Lys-312–Ala-364 form the TSP type-1 domain. 2 cysteine pairs are disulfide-bonded: Cys-324–Cys-358 and Cys-328–Cys-363. An O-linked (Fuc) threonine glycan is attached at Thr-327. Cys-363 carries the GPI-anchor amidated cysteine lipid modification. Positions Ala-364–Asn-386 are cleaved as a propeptide — removed in mature form.

It belongs to the plasmodium circumsporozoite protein family. During host cell invasion, proteolytically cleaved at the cell membrane in the region I by a papain-like cysteine protease of parasite origin. Cleavage is triggered by the sporozoite contact with highly sulfated heparan sulfate proteoglycans (HSPGs) present on the host hepatocyte cell surface. Cleavage exposes the TSP type-1 (TSR) domain and is required for productive invasion of host hepatocytes but not for adhesion to the host cell membrane. Cleavage is dispensable for sporozoite development in the oocyst, motility and for traversal of host and vector cells. In terms of processing, O-glycosylated; maybe by POFUT2.

Its subcellular location is the cell membrane. It is found in the cytoplasm. Functionally, essential sporozoite protein. In the mosquito vector, required for sporozoite development in the oocyst, migration through the vector hemolymph and entry into the vector salivary glands. In the vertebrate host, required for sporozoite migration through the host dermis and infection of host hepatocytes. Binds to highly sulfated heparan sulfate proteoglycans (HSPGs) on the surface of host hepatocytes. Its function is as follows. In the vertebrate host, binds to highly sulfated heparan sulfate proteoglycans (HSPGs) on the surface of host hepatocytes and is required for sporozoite invasion of the host hepatocytes. This chain is Circumsporozoite protein, found in Plasmodium simium.